Here is a 129-residue protein sequence, read N- to C-terminus: MLMKQVSAFLLVGIGGFLGSAARYGASLLLSPVAGGLPLATFSVNIIGCFFIGFISELALSTTLVSPESRLFLVTGFCGGFTTFSSYIFENASLLKDGQMLYTSAYLAGSVIGGFVALYSGTFFAKIWT.

4 helical membrane passes run 1–21 (MLMKQVSAFLLVGIGGFLGSA), 35–55 (GGLPLATFSVNIIGCFFIGFI), 71–91 (LFLVTGFCGGFTTFSSYIFEN), and 105–125 (AYLAGSVIGGFVALYSGTFFA). Residues Gly79 and Thr82 each contribute to the Na(+) site.

This sequence belongs to the fluoride channel Fluc/FEX (TC 1.A.43) family.

Its subcellular location is the cell inner membrane. It carries out the reaction fluoride(in) = fluoride(out). With respect to regulation, na(+) is not transported, but it plays an essential structural role and its presence is essential for fluoride channel function. In terms of biological role, fluoride-specific ion channel. Important for reducing fluoride concentration in the cell, thus reducing its toxicity. This is Fluoride-specific ion channel FluC from Chlorobium phaeobacteroides (strain DSM 266 / SMG 266 / 2430).